A 209-amino-acid chain; its full sequence is Isopentenyl-diphosphate Delta-isomerase (209 aa).

Mn(2+)-binding residues include His-31 and His-38. Residues 36–171 enclose the Nudix hydrolase domain; that stretch reads PLHLAFSVYI…RLLVSPWCRA (136 aa). Residue Cys-73 is part of the active site. A Mg(2+)-binding site is contributed by Cys-73. Mn(2+) is bound at residue His-75. Glu-93 is a binding site for Mg(2+). Residues Glu-120 and Glu-122 each contribute to the Mn(2+) site. The active site involves Glu-122.

This sequence belongs to the IPP isomerase type 1 family. Mg(2+) is required as a cofactor. The cofactor is Mn(2+).

It localises to the cytoplasm. The enzyme catalyses isopentenyl diphosphate = dimethylallyl diphosphate. Its pathway is isoprenoid biosynthesis; dimethylallyl diphosphate biosynthesis; dimethylallyl diphosphate from isopentenyl diphosphate: step 1/1. Its function is as follows. Catalyzes the 1,3-allylic rearrangement of the homoallylic substrate isopentenyl (IPP) to its highly electrophilic allylic isomer, dimethylallyl diphosphate (DMAPP). In Rhizobium rhizogenes (Agrobacterium rhizogenes), this protein is Isopentenyl-diphosphate Delta-isomerase.